A 1347-amino-acid chain; its full sequence is Probable serine/threonine-protein kinase DDB_G0288147 (1347 aa).

The Phorbol-ester/DAG-type zinc-finger motif lies at 12-67; sequence NHRFEPYTLKHLTICKRCEKEIIGVSNSAQICYSCKNIYHTRCCKEIETKKLELIC. Disordered stretches follow at residues 262-316, 333-402, and 463-485; these read PFNE…LNES, SNNS…KSSK, and DNNN…NNNN. A compositionally biased stretch (polar residues) spans 271 to 282; the sequence is DSTLSASTYNRR. Low complexity-rich tracts occupy residues 286–316, 333–342, and 350–361; these read KNKN…LNES, SNNSNNLAAL, and TTTTTTTTTTTT. Basic residues-rich tracts occupy residues 366-382 and 389-402; these read NNHH…KSRK and NKKK…KSSK. The segment covering 464–485 has biased composition (low complexity); it reads NNNNNNNNNNNNNNNSNNNNNN. The Protein kinase domain maps to 599-854; that stretch reads VKINVEIYDS…EILKVFYSLL (256 aa). Residues 605-613 and Lys626 contribute to the ATP site; that span reads IYDSPLCTV. The Proton acceptor role is filled by Asp724. Disordered regions lie at residues 937 to 1241 and 1282 to 1310; these read SERK…IVNP and SSDS…IRSP. Acidic residues predominate over residues 976 to 986; the sequence is IIDDDDDDDDD. 2 stretches are compositionally biased toward low complexity: residues 1004–1015 and 1024–1062; these read NINSENKNNNNV and SSNS…NNNN. 2 stretches are compositionally biased toward polar residues: residues 1063–1083 and 1118–1127; these read LRQN…NQLM and LSSSQTSEIG. Composition is skewed to low complexity over residues 1128–1241 and 1282–1291; these read DNNT…IVNP and SSDSSNSLSD.

Belongs to the protein kinase superfamily. TKL Ser/Thr protein kinase family.

The enzyme catalyses L-seryl-[protein] + ATP = O-phospho-L-seryl-[protein] + ADP + H(+). It catalyses the reaction L-threonyl-[protein] + ATP = O-phospho-L-threonyl-[protein] + ADP + H(+). The sequence is that of Probable serine/threonine-protein kinase DDB_G0288147 from Dictyostelium discoideum (Social amoeba).